A 576-amino-acid chain; its full sequence is Glutamine-dependent NAD(+) synthetase (576 aa).

In terms of domain architecture, CN hydrolase spans 4–246 (LRVTLAQLNP…EEIITVDLDL (243 aa)). The active-site Proton acceptor; for glutaminase activity is the Glu-44. The For glutaminase activity role is filled by Lys-112. Position 118 (Tyr-118) interacts with L-glutamine. The active-site Nucleophile; for glutaminase activity is Cys-148. L-glutamine contacts are provided by Ser-176 and Lys-182. A ligase region spans residues 292–576 (PVREEEMFRA…PITNRFKEPL (285 aa)). Residue 321–328 (GLSGGMDS) participates in ATP binding. Asn-404 contributes to the deamido-NAD(+) binding site. Thr-428 contributes to the ATP binding site. Deamido-NAD(+) is bound by residues Glu-433 and Lys-545.

It in the C-terminal section; belongs to the NAD synthetase family.

The catalysed reaction is deamido-NAD(+) + L-glutamine + ATP + H2O = L-glutamate + AMP + diphosphate + NAD(+) + H(+). The protein operates within cofactor biosynthesis; NAD(+) biosynthesis; NAD(+) from deamido-NAD(+) (L-Gln route): step 1/1. Functionally, catalyzes the ATP-dependent amidation of deamido-NAD to form NAD. Uses L-glutamine as a nitrogen source. The polypeptide is Glutamine-dependent NAD(+) synthetase (nadE2) (Thermotoga maritima (strain ATCC 43589 / DSM 3109 / JCM 10099 / NBRC 100826 / MSB8)).